The sequence spans 435 residues: Glutamyl-tRNA reductase (435 aa).

Substrate-binding positions include 49–52 (TCNR), serine 109, 114–116 (ETQ), and glutamine 120. Cysteine 50 functions as the Nucleophile in the catalytic mechanism. 189–194 (GAGEMS) is an NADP(+) binding site.

The protein belongs to the glutamyl-tRNA reductase family. As to quaternary structure, homodimer.

The catalysed reaction is (S)-4-amino-5-oxopentanoate + tRNA(Glu) + NADP(+) = L-glutamyl-tRNA(Glu) + NADPH + H(+). The protein operates within porphyrin-containing compound metabolism; protoporphyrin-IX biosynthesis; 5-aminolevulinate from L-glutamyl-tRNA(Glu): step 1/2. Catalyzes the NADPH-dependent reduction of glutamyl-tRNA(Glu) to glutamate 1-semialdehyde (GSA). This chain is Glutamyl-tRNA reductase, found in Listeria monocytogenes serotype 4b (strain CLIP80459).